A 382-amino-acid chain; its full sequence is Sulfate adenylyltransferase (382 aa).

This sequence belongs to the sulfate adenylyltransferase family.

The enzyme catalyses sulfate + ATP + H(+) = adenosine 5'-phosphosulfate + diphosphate. The protein operates within sulfur metabolism; hydrogen sulfide biosynthesis; sulfite from sulfate: step 1/3. In Ignicoccus hospitalis (strain KIN4/I / DSM 18386 / JCM 14125), this protein is Sulfate adenylyltransferase.